The following is a 148-amino-acid chain: Putative pre-16S rRNA nuclease (148 aa).

Belongs to the YqgF nuclease family.

The protein localises to the cytoplasm. In terms of biological role, could be a nuclease involved in processing of the 5'-end of pre-16S rRNA. In Chlamydia muridarum (strain MoPn / Nigg), this protein is Putative pre-16S rRNA nuclease.